The chain runs to 484 residues: RxLR effector protein PexRD18 (484 aa).

A signal peptide spans 1 to 20 (MSHQRILLLLMAAFFAWVSA). Residues 55–79 (RFLRLYDAEVRDTVRGDNDVDREER) carry the RxLR-dEER motif.

The protein belongs to the RxLR effector family.

It is found in the secreted. It localises to the host cell membrane. Functionally, effector that enhances P.infestans colonization of Nicotiana benthamiana leaves. The sequence is that of RxLR effector protein PexRD18 from Phytophthora infestans (strain T30-4) (Potato late blight agent).